We begin with the raw amino-acid sequence, 148 residues long: Glycine cleavage system H protein 5 (148 aa).

The Lipoyl-binding domain maps to 33–115; it reads VFTIGLTSVA…YGQGWIAKVK (83 aa). N6-lipoyllysine is present on Lys74.

This sequence belongs to the GcvH family. The glycine cleavage system is composed of four proteins: P, T, L and H. The cofactor is (R)-lipoate.

Its function is as follows. The glycine cleavage system catalyzes the degradation of glycine. The H protein shuttles the methylamine group of glycine from the P protein to the T protein. The chain is Glycine cleavage system H protein 5 from Aquifex aeolicus (strain VF5).